The chain runs to 428 residues: Serine--tRNA ligase (428 aa).

Residue 235–237 participates in L-serine binding; it reads TAE. 266-268 contributes to the ATP binding site; sequence RSE. E289 contacts L-serine. Residue 353–356 participates in ATP binding; sequence EISS. L-serine is bound at residue S389.

The protein belongs to the class-II aminoacyl-tRNA synthetase family. Type-1 seryl-tRNA synthetase subfamily. Homodimer. The tRNA molecule binds across the dimer.

The protein resides in the cytoplasm. It carries out the reaction tRNA(Ser) + L-serine + ATP = L-seryl-tRNA(Ser) + AMP + diphosphate + H(+). The enzyme catalyses tRNA(Sec) + L-serine + ATP = L-seryl-tRNA(Sec) + AMP + diphosphate + H(+). It participates in aminoacyl-tRNA biosynthesis; selenocysteinyl-tRNA(Sec) biosynthesis; L-seryl-tRNA(Sec) from L-serine and tRNA(Sec): step 1/1. Its function is as follows. Catalyzes the attachment of serine to tRNA(Ser). Is also able to aminoacylate tRNA(Sec) with serine, to form the misacylated tRNA L-seryl-tRNA(Sec), which will be further converted into selenocysteinyl-tRNA(Sec). The polypeptide is Serine--tRNA ligase (Shewanella sp. (strain ANA-3)).